Here is a 253-residue protein sequence, read N- to C-terminus: 7-carboxy-7-deazaguanine synthase (253 aa).

Substrate is bound by residues 12 to 14 (WQG) and arginine 32. The region spanning 23 to 253 (AFGRRQIFVR…FQVHKYLNVL (231 aa)) is the Radical SAM core domain. The [4Fe-4S] cluster site is built by cysteine 36, cysteine 40, and cysteine 43. Serine 45 is a binding site for Mg(2+). Threonine 98 contacts substrate. S-adenosyl-L-methionine is bound at residue glycine 100.

It belongs to the radical SAM superfamily. 7-carboxy-7-deazaguanine synthase family. In terms of assembly, homodimer. The cofactor is [4Fe-4S] cluster. Requires S-adenosyl-L-methionine as cofactor. It depends on Mg(2+) as a cofactor.

The catalysed reaction is 6-carboxy-5,6,7,8-tetrahydropterin + H(+) = 7-carboxy-7-deazaguanine + NH4(+). The protein operates within purine metabolism; 7-cyano-7-deazaguanine biosynthesis. Functionally, catalyzes the complex heterocyclic radical-mediated conversion of 6-carboxy-5,6,7,8-tetrahydropterin (CPH4) to 7-carboxy-7-deazaguanine (CDG), a step common to the biosynthetic pathways of all 7-deazapurine-containing compounds. In Thermococcus kodakarensis (strain ATCC BAA-918 / JCM 12380 / KOD1) (Pyrococcus kodakaraensis (strain KOD1)), this protein is 7-carboxy-7-deazaguanine synthase.